Here is a 558-residue protein sequence, read N- to C-terminus: Membrane protein insertase YidC (558 aa).

The next 6 helical transmembrane spans lie at 5-25 (IINL…WQYF), 332-352 (AIDF…MNFF), 355-375 (YVGN…LLMF), 429-449 (LPIL…YVTI), 474-494 (LFGL…WPIL), and 520-540 (FMPL…LIYW).

This sequence belongs to the OXA1/ALB3/YidC family. Type 1 subfamily. In terms of assembly, interacts with the Sec translocase complex via SecD. Specifically interacts with transmembrane segments of nascent integral membrane proteins during membrane integration.

The protein resides in the cell inner membrane. In terms of biological role, required for the insertion and/or proper folding and/or complex formation of integral membrane proteins into the membrane. Involved in integration of membrane proteins that insert both dependently and independently of the Sec translocase complex, as well as at least some lipoproteins. Aids folding of multispanning membrane proteins. This is Membrane protein insertase YidC from Rickettsia typhi (strain ATCC VR-144 / Wilmington).